The chain runs to 105 residues: Circadian clock oscillator protein KaiB (105 aa).

The protein belongs to the KaiB family. May undergo a major conformational rearrangment; in the free state forms homooligomers. When bound to KaiC switches to a monomeric thioredoxin-fold (KaiB(fs)). The active oscillator complex is probably KaiC(6):KaiB(6).

Its function is as follows. Component of the KaiBC clock protein complex, which constitutes the main circadian regulator in cyanobacteria; it may modify the ATPase activity of KaiC. In terms of biological role, may be a metamorphic protein which reversibly switches between an inactive tetrameric fold and a rare, thioredoxin-like monomeric fold (KaiB(fs)). KaiB(fs) binds phospho-KaiC, and perhaps clock output effectors. The polypeptide is Circadian clock oscillator protein KaiB (Prochlorococcus marinus (strain MIT 9312)).